We begin with the raw amino-acid sequence, 318 residues long: Electron transfer flavoprotein subunit alpha (318 aa).

Residue leucine 257 to aspartate 285 participates in FAD binding.

Belongs to the ETF alpha-subunit/FixB family. In terms of assembly, heterodimer of an alpha and a beta subunit. It depends on FAD as a cofactor.

In terms of biological role, the electron transfer flavoprotein serves as a specific electron acceptor for other dehydrogenases. It transfers the electrons to the main respiratory chain via ETF-ubiquinone oxidoreductase (ETF dehydrogenase). This chain is Electron transfer flavoprotein subunit alpha (etfA), found in Mycobacterium tuberculosis (strain CDC 1551 / Oshkosh).